A 461-amino-acid polypeptide reads, in one-letter code: MLELRHRGGCPGPGGAGTPPPREGEAAGGDHETESTSDKETDIDDRYGDLDARGDSDVPEVPPSSDRTPEILKKALSGLSSRWKNWWIRGILTLTMISLFFLIIYMGSFMLMLLVLGIQVKCFQEIITIGYRVYHSYDLPWFRTLSWYFLLCVNYFFYGETVADYFATFVQREEQLQFLIRYHRFISFALYLAGFCMFVLSLVKKHYRLQFYMFAWTHVTLLITVTQSHLVIQNLFEGMIWFLVPISSVICNDITAYLFGFFFGRTPLIKLSPKKTWEGFIGGFFSTVIFGFIAAYVLSKYQYFVCPVEYRSDVNSFVTECEPSELFQLQNYSLPPFLQAVLSRETVSLYPFQIHSIALSTFASLIGPFGGFFASGFKRAFKIKDFANTIPGHGGIMDRFDCQYLMATFVHVYITSFIRGPNPSKVLQQLLVLQPEQQLNIYRTLKIHLTEKGILQPTWKV.

A disordered region spans residues 1–68 (MLELRHRGGC…PEVPPSSDRT (68 aa)). Arg-7 is subject to Omega-N-methylarginine. Residues 22–56 (REGEAAGGDHETESTSDKETDIDDRYGDLDARGDS) show a composition bias toward basic and acidic residues. Residues Ser-35 and Ser-37 each carry the phosphoserine modification. The next 6 membrane-spanning stretches (helical) occupy residues 96 to 116 (MISL…LLVL), 149 to 169 (FLLC…FATF), 183 to 203 (HRFI…LSLV), 230 to 250 (LVIQ…SSVI), 279 to 299 (GFIG…YVLS), and 357 to 377 (IALS…ASGF).

Belongs to the CDS family. In terms of assembly, homodimer. Interacts with FOS; this interaction may enhance catalytic activity. Requires Mg(2+) as cofactor. Brain, retina and testis. Found in cerebellar Purkinje cells, pineal body, inner segment of photoreceptor cells and postmitotic spermatocytes and spermatids.

The protein resides in the endoplasmic reticulum membrane. The enzyme catalyses a 1,2-diacyl-sn-glycero-3-phosphate + CTP + H(+) = a CDP-1,2-diacyl-sn-glycerol + diphosphate. It carries out the reaction 1-octadecanoyl-2-(5Z,8Z,11Z,14Z-eicosatetraenoyl)-sn-glycero-3-phosphate + CTP + H(+) = 1-octadecanoyl-2-(5Z,8Z,11Z,14Z-eicosatetraenoyl)-sn-glycero-3-cytidine-5'-diphosphate + diphosphate. It catalyses the reaction 1-octadecanoyl-2-(9Z,12Z-octadecadienoyl)-sn-glycero-3-phosphate + CTP + H(+) = 1-octadecanoyl-2-(9Z,12Z-octadecadienoyl)-sn-glycero-3-cytidine-5'-diphosphate + diphosphate. The catalysed reaction is 1-hexadecanoyl-2-(5Z,8Z,11Z,14Z-eicosatetraenoyl)-sn-glycero-3-phosphate + CTP + H(+) = 1-hexadecanoyl-2-(5Z,8Z,11Z,14Z-eicosatetraenoyl)-sn-glycero-3-cytidine-5'-diphosphate + diphosphate. The enzyme catalyses 1,2-di-(5Z,8Z,11Z,14Z)-eicosatetraenoyl-sn-glycero-3-phosphate + CTP + H(+) = 1,2-di-(5Z,8Z,11Z,14Z-eicosatetraenoyl)-sn-glycero-3-cytidine-5'-diphosphate + diphosphate. It carries out the reaction 1-octadecanoyl-2-(9Z-octadecenoyl)-sn-glycero-3-phosphate + CTP + H(+) = 1-octadecanoyl-2-(9Z-octadecenoyl)-sn-glycero-3-cytidine-5'-diphosphate + diphosphate. It catalyses the reaction 1-octadecanoyl-2-(4Z,7Z,10Z,13Z,16Z,19Z-docosahexaenoyl)-sn-glycero-3-phosphate + CTP + H(+) = 1-octadecanoyl-2-(4Z,7Z,10Z,13Z,16Z,19Z-docosahexaenoyl)-sn-glycero-3-cytidine-5'-diphosphate + diphosphate. The catalysed reaction is 1,2-di-(9Z,12Z-octadecadienoyl)-sn-glycero-3-phosphate + CTP + H(+) = 1,2-di-(9Z,12Z-octadecadienoyl)-sn-glycero-3-cytidine-5'-diphosphate + diphosphate. The enzyme catalyses 1,2-di-(9Z-octadecenoyl)-sn-glycero-3-phosphate + CTP + H(+) = 1,2-di-(9Z-octadecenoyl)-sn-glycero-3-cytidine-5'-diphosphate + diphosphate. The protein operates within phospholipid metabolism; CDP-diacylglycerol biosynthesis; CDP-diacylglycerol from sn-glycerol 3-phosphate: step 3/3. Activated by GTP. Inhibited by CDP-diacylglycerol and by phosphatidylglycerol 4,5-bisphosphate (PPI2). Its function is as follows. Catalyzes the conversion of phosphatidic acid (PA) to CDP-diacylglycerol (CDP-DAG), an essential intermediate in the synthesis of phosphatidylglycerol, cardiolipin and phosphatidylinositol. Exhibits almost no acyl chain preference for PA, showing no discrimination for the sn-1/sn-2 acyl chain composition of PAs. Plays an important role in regulatinng the growth of lipid droplets which are storage organelles at the center of lipid and energy homeostasis. Positively regulates the differentiation and development of adipocytes. The sequence is that of Phosphatidate cytidylyltransferase 1 from Rattus norvegicus (Rat).